The following is a 314-amino-acid chain: MSENAAPGLISELKLAVPWGHIAAKAWGSLQGPPVLCLHGWLDNASSFDRLIPLLPQDFYYVAMDFGGHGLSSHYSPGVPYYLQTFVSEIRRVVAALKWNRFSILGHSFGGVVGGMFFCTFPEMVDKLILLDTPLFLLESDEMENLLTYKRRAIEHVLQVEASQEPSHVFSLKQLLQRLLKSNSHLSEECGELLLQRGTTKVATGLVLNRDQRLAWAENSIDFISRELCAHSIRKLQAHVLLIKAVHGYFDSRQNYSEKESLSFMIDTMKSTLKEQFQFVEVPGNHCVHMSEPQHVASIISSFLQCTHMLPAQL.

In terms of domain architecture, AB hydrolase-1 spans 33–293 (PPVLCLHGWL…GNHCVHMSEP (261 aa)). Ser-108 is a catalytic residue.

Belongs to the AB hydrolase superfamily.

It localises to the cytoplasm. It is found in the perinuclear region. The protein localises to the peroxisome. In terms of biological role, probable serine hydrolase. May be related to cell muscle hypertrophy. This Homo sapiens (Human) protein is Serine hydrolase-like protein 2 (SERHL2).